The chain runs to 125 residues: Immunoglobulin heavy variable 4-39 (125 aa).

Residues 1–26 (MDLMCKKMKHLWFFLLLVAAPRWVLS) form the signal peptide. Positions 27-51 (QLQLQESGPGLVKPSETLSLTCTVS) are framework-1. Positions 27–125 (QLQLQESGPG…ADTAVYYCAR (99 aa)) constitute an Ig-like domain. Residues cysteine 48 and cysteine 123 are joined by a disulfide bond. The segment at 52-61 (GGSISSSSYY) is complementarity-determining-1. Residues 62-78 (WGWIRQPPGKGLEWIGS) are framework-2. A complementarity-determining-2 region spans residues 79 to 85 (IYYSGST). The framework-3 stretch occupies residues 86-123 (YYNPSLKSRVTISVDTSKNQFSLKLSSVTAADTAVYYC). Residues 124–125 (AR) are complementarity-determining-3.

As to quaternary structure, immunoglobulins are composed of two identical heavy chains and two identical light chains; disulfide-linked.

The protein resides in the secreted. Its subcellular location is the cell membrane. Functionally, v region of the variable domain of immunoglobulin heavy chains that participates in the antigen recognition. Immunoglobulins, also known as antibodies, are membrane-bound or secreted glycoproteins produced by B lymphocytes. In the recognition phase of humoral immunity, the membrane-bound immunoglobulins serve as receptors which, upon binding of a specific antigen, trigger the clonal expansion and differentiation of B lymphocytes into immunoglobulins-secreting plasma cells. Secreted immunoglobulins mediate the effector phase of humoral immunity, which results in the elimination of bound antigens. The antigen binding site is formed by the variable domain of one heavy chain, together with that of its associated light chain. Thus, each immunoglobulin has two antigen binding sites with remarkable affinity for a particular antigen. The variable domains are assembled by a process called V-(D)-J rearrangement and can then be subjected to somatic hypermutations which, after exposure to antigen and selection, allow affinity maturation for a particular antigen. This chain is Immunoglobulin heavy variable 4-39, found in Homo sapiens (Human).